We begin with the raw amino-acid sequence, 290 residues long: tRNA (guanine-N(7)-)-methyltransferase (290 aa).

Composition is skewed to basic and acidic residues over residues 1 to 12 (MSDSLHTPEEPR) and 20 to 43 (AHAH…DGPK). Residues 1–49 (MSDSLHTPEEPRPGPGEQLAHAHDGSLRHTRAKGEPRFPDGPKADPAGS) form a disordered region. Glu104, Asp129, Asp156, and Asp179 together coordinate S-adenosyl-L-methionine. The active site involves Asp179. Substrate contacts are provided by residues Lys183, Asp215, and 252 to 255 (TRFE).

This sequence belongs to the class I-like SAM-binding methyltransferase superfamily. TrmB family.

It catalyses the reaction guanosine(46) in tRNA + S-adenosyl-L-methionine = N(7)-methylguanosine(46) in tRNA + S-adenosyl-L-homocysteine. Its pathway is tRNA modification; N(7)-methylguanine-tRNA biosynthesis. Functionally, catalyzes the formation of N(7)-methylguanine at position 46 (m7G46) in tRNA. In Streptomyces avermitilis (strain ATCC 31267 / DSM 46492 / JCM 5070 / NBRC 14893 / NCIMB 12804 / NRRL 8165 / MA-4680), this protein is tRNA (guanine-N(7)-)-methyltransferase.